The chain runs to 347 residues: Ataxin-7-like protein 3 (347 aa).

An SGF11-type zinc finger spans residues 84–105; it reads CVCPNCSRSIAASRFAPHLEKC. Residues 116-125 are compositionally biased toward low complexity; that stretch reads ANRRIANSNN. Residues 116–184 are disordered; it reads ANRRIANSNN…GELSNSDPFK (69 aa). 2 positions are modified to phosphoserine: serine 129 and serine 131. The span at 132-141 shows a compositional bias: acidic residues; that stretch reads DQEDNDDIND. The SCA7 domain occupies 196 to 263; that stretch reads LGPEELRSLL…SLDNDGFDMT (68 aa). Positions 275-288 are enriched in low complexity; it reads DGSSDLSPSDSGSS. A disordered region spans residues 275–347; sequence DGSSDLSPSD…PTPSIYDDIN (73 aa). Phosphoserine is present on residues serine 278, serine 281, and serine 326.

This sequence belongs to the SGF11 family. In terms of assembly, component of some SAGA transcription coactivator-HAT complexes, at least composed of ATXN7, ATXN7L3, ENY2, GCN5L2, SUPT3H, TAF10, TRRAP and USP22. Within the SAGA complex, ENY2, ATXN7, ATXN7L3, and USP22 form an additional subcomplex of SAGA called the DUB module (deubiquitination module). Interacts directly with ENY2 and USP22.

It localises to the nucleus. Functionally, component of the transcription regulatory histone acetylation (HAT) complex SAGA, a multiprotein complex that activates transcription by remodeling chromatin and mediating histone acetylation and deubiquitination. Within the SAGA complex, participates in a subcomplex that specifically deubiquitinates both histones H2A and H2B. The SAGA complex is recruited to specific gene promoters by activators such as MYC, where it is required for transcription. Required for nuclear receptor-mediated transactivation. Within the complex, it is required to recruit USP22 and ENY2 into the SAGA complex. Regulates H2B monoubiquitination (H2Bub1) levels. Affects subcellular distribution of ENY2, USP22 and ATXN7L3B. In Mus musculus (Mouse), this protein is Ataxin-7-like protein 3 (Atxn7l3).